A 127-amino-acid chain; its full sequence is Phosphoribosyl-AMP cyclohydrolase (127 aa).

Mg(2+) is bound at residue aspartate 78. Cysteine 79 provides a ligand contact to Zn(2+). Aspartate 80 and aspartate 82 together coordinate Mg(2+). Residues cysteine 95 and cysteine 102 each coordinate Zn(2+).

This sequence belongs to the PRA-CH family. In terms of assembly, homodimer. Requires Mg(2+) as cofactor. Zn(2+) serves as cofactor.

The protein resides in the cytoplasm. The enzyme catalyses 1-(5-phospho-beta-D-ribosyl)-5'-AMP + H2O = 1-(5-phospho-beta-D-ribosyl)-5-[(5-phospho-beta-D-ribosylamino)methylideneamino]imidazole-4-carboxamide. The protein operates within amino-acid biosynthesis; L-histidine biosynthesis; L-histidine from 5-phospho-alpha-D-ribose 1-diphosphate: step 3/9. Catalyzes the hydrolysis of the adenine ring of phosphoribosyl-AMP. This chain is Phosphoribosyl-AMP cyclohydrolase, found in Salinibacter ruber (strain DSM 13855 / M31).